Here is a 356-residue protein sequence, read N- to C-terminus: 5-formaminoimidazole-4-carboxamide-1-(beta)-D-ribofuranosyl 5'-monophosphate synthetase (356 aa).

2 residues coordinate 5-amino-1-(5-phospho-beta-D-ribosyl)imidazole-4-carboxamide: His27 and Ser94. The region spanning Arg116–Ser333 is the ATP-grasp domain. Residues Ala145 to Tyr196 and Glu226 each bind ATP. Asn255 is a 5-amino-1-(5-phospho-beta-D-ribosyl)imidazole-4-carboxamide binding site. Glu293 and Glu306 together coordinate Mg(2+).

This sequence belongs to the phosphohexose mutase family. It depends on Mg(2+) as a cofactor. The cofactor is Mn(2+).

It catalyses the reaction 5-amino-1-(5-phospho-beta-D-ribosyl)imidazole-4-carboxamide + formate + ATP = 5-formamido-1-(5-phospho-D-ribosyl)imidazole-4-carboxamide + ADP + phosphate. It functions in the pathway purine metabolism; IMP biosynthesis via de novo pathway; 5-formamido-1-(5-phospho-D-ribosyl)imidazole-4-carboxamide from 5-amino-1-(5-phospho-D-ribosyl)imidazole-4-carboxamide (formate route): step 1/1. Functionally, catalyzes the ATP- and formate-dependent formylation of 5-aminoimidazole-4-carboxamide-1-beta-d-ribofuranosyl 5'-monophosphate (AICAR) to 5-formaminoimidazole-4-carboxamide-1-beta-d-ribofuranosyl 5'-monophosphate (FAICAR) in the absence of folates. In Methanothrix thermoacetophila (strain DSM 6194 / JCM 14653 / NBRC 101360 / PT) (Methanosaeta thermophila), this protein is 5-formaminoimidazole-4-carboxamide-1-(beta)-D-ribofuranosyl 5'-monophosphate synthetase.